The chain runs to 999 residues: Multiple C2 and transmembrane domain-containing protein 1 (999 aa).

The span at 1–19 (MEPRAAAAGEPEPPAASSS) shows a compositional bias: low complexity. The tract at residues 1–241 (MEPRAAAAGE…TGEEHGSSQK (241 aa)) is disordered. The segment covering 34 to 44 (RSKGGGGGRAG) has biased composition (gly residues). Positions 65-79 (GNAPARGSGAGSRWS) are enriched in low complexity. Polar residues predominate over residues 92–101 (FSSSQPNLCC). Low complexity-rich tracts occupy residues 131 to 141 (PAVKGPAAASG) and 149 to 169 (GGRS…LSSS). Basic and acidic residues-rich tracts occupy residues 175–185 (RGDRARDEGAR) and 228–238 (RAPETGEEHGS). 3 consecutive C2 domains span residues 242–360 (IINT…DVTL), 452–569 (QTQS…KLEL), and 603–724 (QKER…AYVL). The Ca(2+) site is built by Asp-277, Asp-283, Asp-330, Asp-332, Asp-338, Asp-486, Asp-492, Asp-539, Asp-541, Asp-547, Asp-642, Asp-648, Asp-694, Asp-696, and Asp-702. 2 helical membrane passes run 811–831 (FVLF…LVLL) and 914–934 (PFLS…LYCI).

This sequence belongs to the MCTP family. The cofactor is Ca(2+).

The protein localises to the cytoplasmic vesicle. Its subcellular location is the secretory vesicle. The protein resides in the synaptic vesicle membrane. It localises to the recycling endosome. It is found in the endoplasmic reticulum membrane. Calcium sensor which is essential for the stabilization of normal baseline neurotransmitter release and for the induction and long-term maintenance of presynaptic homeostatic plasticity. This is Multiple C2 and transmembrane domain-containing protein 1 (MCTP1) from Homo sapiens (Human).